The primary structure comprises 206 residues: Max dimerization protein 3 (206 aa).

Positions 8-25 are interaction with SIN3A and SIN3B; sequence IQVLLQAAEFLERREREA. Disordered stretches follow at residues 29-66 and 122-171; these read YASLCPHHSPGTVCRRRKPPLQAPGALNSGRSVHNELE and KLRS…QEDL. One can recognise a bHLH domain in the interval 57–109; sequence SGRSVHNELEKRRRAQLKRCLEQLRQQMPLGVDCTRYTTLSLLRRARVHIQKL. Positions 126–138 are enriched in low complexity; the sequence is KQQSLQQQLEQLQ. Residues 143–153 show a composition bias toward basic and acidic residues; the sequence is ARERERLRADS.

As to quaternary structure, efficient DNA binding requires dimerization with another bHLH protein. Binds DNA as a heterodimer with MAX. Interacts with SIN3A AND SIN3B. Interacts with RNF17. As to expression, expressed only in the proliferating areas of the testis and thymus.

The protein localises to the nucleus. Its function is as follows. Transcriptional repressor. Binds with MAX to form a sequence-specific DNA-binding protein complex which recognizes the core sequence 5'-CAC[GA]TG-3'. Antagonizes MYC transcriptional activity by competing for MAX and suppresses MYC dependent cell transformation. This Mus musculus (Mouse) protein is Max dimerization protein 3 (Mxd3).